The chain runs to 1481 residues: Chromosome partition protein MukB (1481 aa).

ATP is bound at residue 34-41; the sequence is GGNGAGKS. 5 coiled-coil regions span residues 338-480, 509-604, 780-805, 835-1116, and 1210-1265; these read SLVQ…QAYQ, QHLA…APVW, RAARENRLEALYQERDSLAERYATLS, EAEI…AKAG, and EAIE…LQAV. A flexible hinge region spans residues 666–783; sequence PSGAEDSRMI…EVPLFGRAAR (118 aa).

The protein belongs to the SMC family. MukB subfamily. As to quaternary structure, homodimerization via its hinge domain. Binds to DNA via its C-terminal region. Interacts, and probably forms a ternary complex, with MukE and MukF via its C-terminal region. The complex formation is stimulated by calcium or magnesium. Interacts with tubulin-related protein FtsZ.

The protein localises to the cytoplasm. It localises to the nucleoid. In terms of biological role, plays a central role in chromosome condensation, segregation and cell cycle progression. Functions as a homodimer, which is essential for chromosome partition. Involved in negative DNA supercoiling in vivo, and by this means organize and compact chromosomes. May achieve or facilitate chromosome segregation by condensation DNA from both sides of a centrally located replisome during cell division. This Yersinia enterocolitica serotype O:8 / biotype 1B (strain NCTC 13174 / 8081) protein is Chromosome partition protein MukB.